A 230-amino-acid chain; its full sequence is Orotidine 5'-phosphate decarboxylase (230 aa).

Residues D10, K32, D59 to T68, T119, R180, Q189, G209, and R210 each bind substrate. K61 (proton donor) is an active-site residue.

It belongs to the OMP decarboxylase family. Type 1 subfamily. As to quaternary structure, homodimer.

The catalysed reaction is orotidine 5'-phosphate + H(+) = UMP + CO2. It functions in the pathway pyrimidine metabolism; UMP biosynthesis via de novo pathway; UMP from orotate: step 2/2. In terms of biological role, catalyzes the decarboxylation of orotidine 5'-monophosphate (OMP) to uridine 5'-monophosphate (UMP). The protein is Orotidine 5'-phosphate decarboxylase of Haemophilus influenzae (strain PittEE).